Here is a 99-residue protein sequence, read N- to C-terminus: UPF0235 protein Sbal_3028 (99 aa).

The protein belongs to the UPF0235 family.

This Shewanella baltica (strain OS155 / ATCC BAA-1091) protein is UPF0235 protein Sbal_3028.